Reading from the N-terminus, the 304-residue chain is NADH-cytochrome b5 reductase 2 (304 aa).

The chain crosses the membrane as a helical span at residues 6 to 26 (GTPVVVAVAAVAATVLLLLLL). In terms of domain architecture, FAD-binding FR-type spans 43-155 (QAKYPLPLVG…RGPNGLLVYK (113 aa)). FAD contacts are provided by residues 135 to 165 (DSMK…IKPD) and 174 to 209 (FAKH…KCYL).

Belongs to the flavoprotein pyridine nucleotide cytochrome reductase family. FAD is required as a cofactor.

Its subcellular location is the membrane. The enzyme catalyses 2 Fe(III)-[cytochrome b5] + NADH = 2 Fe(II)-[cytochrome b5] + NAD(+) + H(+). Functionally, NADH-cytochrome b5 reductases are involved in desaturation and elongation of fatty acids, cholesterol biosynthesis and drug metabolism. In Gallus gallus (Chicken), this protein is NADH-cytochrome b5 reductase 2 (CYB5R2).